We begin with the raw amino-acid sequence, 171 residues long: Myelin basic protein (171 aa).

A1 carries the post-translational modification N-acetylalanine. 2 positions are modified to phosphoserine: S7 and S12. Y14 bears the Phosphotyrosine mark. T17 is subject to Phosphothreonine. S19 carries the phosphoserine modification. T20 is modified (phosphothreonine). Residues R25 and R31 each carry the citrulline modification. T35 carries the post-translational modification Phosphothreonine. S40 carries the phosphoserine modification. Omega-N-methylarginine occurs at positions 43 and 49. The segment at 44 to 115 (FFGGDRGAPK…GRGLSLSRFS (72 aa)) is disordered. Residue S56 is modified to Phosphoserine. At Y69 the chain carries Phosphotyrosine. S76 bears the Phosphoserine mark. Residues T80, T95, and T98 each carry the phosphothreonine modification. Q103 carries the post-translational modification Deamidated glutamine. R107 carries the post-translational modification Omega-N-methylarginine; alternate. R107 bears the Symmetric dimethylarginine; alternate mark. S115 carries the post-translational modification Phosphoserine. Citrulline is present on residues R122 and R130. Q148 is modified (deamidated glutamine). A Citrulline modification is found at R160. Phosphoserine is present on S162. Position 166 is a phosphoserine; by UHMK1 (S166). A Citrulline modification is found at R171.

This sequence belongs to the myelin basic protein family. In terms of assembly, homodimer. As in other animals, several charge isomers may be produced as a result of optional post-translational modifications, such as phosphorylation of serine or threonine residues, deamidation of glutamine or asparagine residues, citrullination and methylation of arginine residues. In terms of processing, phosphorylated by TAOK2, VRK2, MAPK11, MAPK12, MAPK14 and MINK1. Post-translationally, proteolytically cleaved in B cell lysosomes by cathepsin CTSG which degrades the major immunogenic MBP epitope and prevents the activation of MBP-specific autoreactive T cells.

The protein localises to the myelin membrane. Is, with PLP, the most abundant protein component of the myelin membrane in the CNS. Has a role in both the formation and stabilization of this compact multilayer arrangement of bilayers. Each splice variant and charge isomer may have a specialized function in the assembly of an optimized, biochemically functional myelin membrane. This chain is Myelin basic protein (MBP), found in Pan troglodytes (Chimpanzee).